A 476-amino-acid polypeptide reads, in one-letter code: MSPQTETKASVGFKAGVKEYKLTYYTPEYETKDTDILAAFRVTPQLGVPPEEAGAAVAAESSTGTWTTVWTDGLTSLDRYKGRCYHIEPVAGETDQYIVYVAYPLDLFEEGSVTNMFTSIVGNVFGFKALRALRLEDLRIPPAYIKTFQGPPHGIQVERDKLNKYGRPLLGCTIKPKLGLSAKNYGRAVYECLRGGLDFTKDDENVNSQPFMRWRDRFLFCAEALYKAQSETGEIKGHYLNATAGTCEEMMKRAVFARELGVPIVMHDYLTGGFTANTSLAHYCRDNGLLLHIHRAMHAVIDRQKNHGIHFRVLAKALRMSGGDHIHSGTVVGKLEGERDITLGFVDLLRDDFIEKDRSRGIYFSQDWVSLPGVLPVASGGIHVWHMPALTEIFGDDSVLQFGGGTLGHPWGNAPGAVANRVALEACVQARNEGRDLASQGNEIIREASKWSPELAAACEVWKEIKFDSFKAMDTL.

The propeptide occupies 1–2 (MS). N-acetylproline is present on Pro-3. At Lys-14 the chain carries N6,N6,N6-trimethyllysine. 2 residues coordinate substrate: Asn-123 and Thr-173. Catalysis depends on Lys-175, which acts as the Proton acceptor. Lys-177 contacts substrate. Positions 201, 203, and 204 each coordinate Mg(2+). N6-carboxylysine is present on Lys-201. His-294 serves as the catalytic Proton acceptor. The substrate site is built by Arg-295, His-327, and Ser-379.

The protein belongs to the RuBisCO large chain family. Type I subfamily. As to quaternary structure, heterohexadecamer of 8 large chains and 8 small chains; disulfide-linked. The disulfide link is formed within the large subunit homodimers. The cofactor is Mg(2+). The disulfide bond which can form in the large chain dimeric partners within the hexadecamer appears to be associated with oxidative stress and protein turnover.

Its subcellular location is the plastid. It is found in the chloroplast. The catalysed reaction is 2 (2R)-3-phosphoglycerate + 2 H(+) = D-ribulose 1,5-bisphosphate + CO2 + H2O. It catalyses the reaction D-ribulose 1,5-bisphosphate + O2 = 2-phosphoglycolate + (2R)-3-phosphoglycerate + 2 H(+). Its function is as follows. RuBisCO catalyzes two reactions: the carboxylation of D-ribulose 1,5-bisphosphate, the primary event in carbon dioxide fixation, as well as the oxidative fragmentation of the pentose substrate in the photorespiration process. Both reactions occur simultaneously and in competition at the same active site. The chain is Ribulose bisphosphate carboxylase large chain from Liriodendron tulipifera (Tuliptree).